Reading from the N-terminus, the 159-residue chain is Na(+)/H(+) antiporter subunit E1 (159 aa).

A run of 4 helical transmembrane segments spans residues 1-21, 27-47, 60-80, and 101-121; these read MAIQFVINLLVSVIWLLVTNS, FVLGFILGLFLVYLLHRVLPG, LIITFLTELIKANFGVLKIIL, and WQLVLLSNLITLTPGTVVLGI.

This sequence belongs to the CPA3 antiporters (TC 2.A.63) subunit E family. In terms of assembly, may form a heterooligomeric complex that consists of seven subunits: mnhA1, mnhB1, mnhC1, mnhD1, mnhE1, mnhF1 and mnhG1.

It localises to the cell membrane. Functionally, mnh complex is a Na(+)/H(+) antiporter involved in Na(+) excretion. The sequence is that of Na(+)/H(+) antiporter subunit E1 (mnhE1) from Staphylococcus epidermidis (strain ATCC 35984 / DSM 28319 / BCRC 17069 / CCUG 31568 / BM 3577 / RP62A).